The chain runs to 181 residues: Ribosome maturation factor RimM (181 aa).

Positions 99 to 172 constitute a PRC barrel domain; the sequence is EDEFYQVDLI…FLIVDPMAAG (74 aa).

It belongs to the RimM family. Binds ribosomal protein uS19.

It is found in the cytoplasm. Its function is as follows. An accessory protein needed during the final step in the assembly of 30S ribosomal subunit, possibly for assembly of the head region. Essential for efficient processing of 16S rRNA. May be needed both before and after RbfA during the maturation of 16S rRNA. It has affinity for free ribosomal 30S subunits but not for 70S ribosomes. This Bartonella tribocorum (strain CIP 105476 / IBS 506) protein is Ribosome maturation factor RimM.